The primary structure comprises 488 residues: Ribulose bisphosphate carboxylase large chain (488 aa).

Residues N127 and T177 each contribute to the substrate site. The active-site Proton acceptor is the K179. K181 provides a ligand contact to substrate. Mg(2+) contacts are provided by K205, D207, and E208. K205 bears the N6-carboxylysine mark. The active-site Proton acceptor is H297. The substrate site is built by R298, H330, and S382.

This sequence belongs to the RuBisCO large chain family. Type I subfamily. In terms of assembly, heterohexadecamer of 8 large chains and 8 small chains. It depends on Mg(2+) as a cofactor.

It is found in the plastid. The protein resides in the chloroplast. The enzyme catalyses 2 (2R)-3-phosphoglycerate + 2 H(+) = D-ribulose 1,5-bisphosphate + CO2 + H2O. The catalysed reaction is D-ribulose 1,5-bisphosphate + O2 = 2-phosphoglycolate + (2R)-3-phosphoglycerate + 2 H(+). Its function is as follows. RuBisCO catalyzes two reactions: the carboxylation of D-ribulose 1,5-bisphosphate, the primary event in carbon dioxide fixation, as well as the oxidative fragmentation of the pentose substrate in the photorespiration process. Both reactions occur simultaneously and in competition at the same active site. This chain is Ribulose bisphosphate carboxylase large chain, found in Rhodomonas salina (Cryptomonas salina).